The sequence spans 157 residues: Transcription elongation factor GreA (157 aa).

Positions 47–75 (SGEYEDAKKAQALLEGRIRELKHLLSRAE) form a coiled coil.

Belongs to the GreA/GreB family.

Necessary for efficient RNA polymerase transcription elongation past template-encoded arresting sites. The arresting sites in DNA have the property of trapping a certain fraction of elongating RNA polymerases that pass through, resulting in locked ternary complexes. Cleavage of the nascent transcript by cleavage factors such as GreA or GreB allows the resumption of elongation from the new 3'terminus. GreA releases sequences of 2 to 3 nucleotides. The polypeptide is Transcription elongation factor GreA (Chloroflexus aurantiacus (strain ATCC 29366 / DSM 635 / J-10-fl)).